Consider the following 369-residue polypeptide: Histidinol-phosphate aminotransferase (369 aa).

The residue at position 222 (Lys222) is an N6-(pyridoxal phosphate)lysine.

It belongs to the class-II pyridoxal-phosphate-dependent aminotransferase family. Histidinol-phosphate aminotransferase subfamily. Homodimer. Pyridoxal 5'-phosphate serves as cofactor.

The enzyme catalyses L-histidinol phosphate + 2-oxoglutarate = 3-(imidazol-4-yl)-2-oxopropyl phosphate + L-glutamate. The protein operates within amino-acid biosynthesis; L-histidine biosynthesis; L-histidine from 5-phospho-alpha-D-ribose 1-diphosphate: step 7/9. In Halalkalibacterium halodurans (strain ATCC BAA-125 / DSM 18197 / FERM 7344 / JCM 9153 / C-125) (Bacillus halodurans), this protein is Histidinol-phosphate aminotransferase.